Consider the following 149-residue polypeptide: Calmodulin-like protein (149 aa).

EF-hand domains are found at residues 6–41, 42–76, 78–113, and 113–148; these read TTQALYKEAFNLFDKDKDGKITIQELGIVMRSVGSN, PTQQELKDIAKEIDDGSGLVDFSKFSSLMTRKMKY, DSEADIKQAFKVFDKKGNGYANIQDLKHTLTSIGEK, and KLTKEEFDNMLKDAKTVDGQIHVDEFVRVIKSSKSF. 5 residues coordinate Ca(2+): aspartate 19, aspartate 21, aspartate 23, lysine 25, and glutamate 30.

It belongs to the calmodulin family.

It is found in the contractile vacuole. In terms of biological role, mediates the control of a large number of enzymes, ion channels and other proteins by Ca(2+) ions. Among the enzymes to be stimulated by the calmodulin-Ca(2+) complex are a number of protein kinases and phosphatases. The sequence is that of Calmodulin-like protein (calB) from Dictyostelium discoideum (Social amoeba).